The primary structure comprises 302 residues: Homoserine O-acetyltransferase 1 (302 aa).

The active-site Acyl-thioester intermediate is cysteine 142. Substrate-binding residues include lysine 163 and serine 192. The Proton acceptor role is filled by histidine 235. Glutamate 237 is an active-site residue. Arginine 249 contacts substrate.

The protein belongs to the MetA family.

Its subcellular location is the cytoplasm. It carries out the reaction L-homoserine + acetyl-CoA = O-acetyl-L-homoserine + CoA. Its pathway is amino-acid biosynthesis; L-methionine biosynthesis via de novo pathway; O-acetyl-L-homoserine from L-homoserine: step 1/1. Functionally, transfers an acetyl group from acetyl-CoA to L-homoserine, forming acetyl-L-homoserine. The chain is Homoserine O-acetyltransferase 1 from Ilyobacter polytropus (strain ATCC 51220 / DSM 2926 / LMG 16218 / CuHBu1).